Consider the following 158-residue polypeptide: NADH-quinone oxidoreductase subunit B (158 aa).

The [4Fe-4S] cluster site is built by C37, C38, C102, and C132.

The protein belongs to the complex I 20 kDa subunit family. In terms of assembly, NDH-1 is composed of 14 different subunits. Subunits NuoB, C, D, E, F, and G constitute the peripheral sector of the complex. Requires [4Fe-4S] cluster as cofactor.

The protein localises to the cell inner membrane. The catalysed reaction is a quinone + NADH + 5 H(+)(in) = a quinol + NAD(+) + 4 H(+)(out). Its function is as follows. NDH-1 shuttles electrons from NADH, via FMN and iron-sulfur (Fe-S) centers, to quinones in the respiratory chain. Couples the redox reaction to proton translocation (for every two electrons transferred, four hydrogen ions are translocated across the cytoplasmic membrane), and thus conserves the redox energy in a proton gradient. The sequence is that of NADH-quinone oxidoreductase subunit B from Bordetella petrii (strain ATCC BAA-461 / DSM 12804 / CCUG 43448).